Consider the following 298-residue polypeptide: MEGMDVDLDPELMQKFSCLGTTDKDVLISEFQRLLGFQLNPAGCAFFLDMTNWNLQAAIGAYYDFESPNISVPSMSFVEDVTIGEGESIPPDTQFVKTWRIQNSGAEAWPPGVCLKYVGGDQFGHVNMVMVRSLEPQEIADVSVQMCSPSRAGMYQGQWRMCTATGLYYGDVIWVILSVEVGGLLGVTQQLSSFETEFNTQPHRKVEGNFNPFASPQKNRQSDENNLKDPGGSEFDSISKNTWAPAPDTWAPAPDQTEQDQNRLSQNSVNLSPSSHANNLSVVTYSKGLHGPYPFGQS.

Positions 199 to 277 are disordered; sequence NTQPHRKVEG…SVNLSPSSHA (79 aa). Serine 215 and serine 222 each carry phosphoserine. The segment covering 242–255 has biased composition (low complexity); the sequence is TWAPAPDTWAPAPD. The segment covering 262–277 has biased composition (polar residues); that stretch reads NRLSQNSVNLSPSSHA. At serine 272 the chain carries Phosphoserine.

In terms of assembly, interacts with IRF3; the interaction inhibits IRF3 binding to its DNA consensus sequence. In terms of tissue distribution, expressed in lung (at protein level).

The protein resides in the cytoplasm. Its subcellular location is the nucleus. Functionally, negative regulator of innate antiviral response. Blocks IRF3-dependent cytokine production such as IFNA, IFNB and TNF. Interacts with IRF3 and inhibits IRF3 recruitment to type I IFN promoter sequences while also reducing nuclear levels of the coactivators EP300 and CREBBP. The protein is Protein ILRUN of Homo sapiens (Human).